Consider the following 300-residue polypeptide: UDP-N-acetylenolpyruvoylglucosamine reductase (300 aa).

The region spanning 30 to 194 (KVGGAADFFV…VGATFRLDPA (165 aa)) is the FAD-binding PCMH-type domain. Residue Arg-174 is part of the active site. Residue Ser-223 is the Proton donor of the active site. Residue Glu-293 is part of the active site.

The protein belongs to the MurB family. It depends on FAD as a cofactor.

The protein resides in the cytoplasm. It carries out the reaction UDP-N-acetyl-alpha-D-muramate + NADP(+) = UDP-N-acetyl-3-O-(1-carboxyvinyl)-alpha-D-glucosamine + NADPH + H(+). It functions in the pathway cell wall biogenesis; peptidoglycan biosynthesis. Functionally, cell wall formation. The polypeptide is UDP-N-acetylenolpyruvoylglucosamine reductase (Geobacter metallireducens (strain ATCC 53774 / DSM 7210 / GS-15)).